The primary structure comprises 459 residues: tRNA modification GTPase MnmE (459 aa).

Residues arginine 22, glutamate 85, and arginine 124 each coordinate (6S)-5-formyl-5,6,7,8-tetrahydrofolate. The TrmE-type G domain maps to 221–380; that stretch reads GLSTVIVGRP…LEIQIKDLFF (160 aa). A K(+)-binding site is contributed by asparagine 231. Residues 231 to 236, 250 to 256, and 275 to 278 contribute to the GTP site; these read NVGKSS, TEVAGTT, and DTAG. Residue serine 235 participates in Mg(2+) binding. 3 residues coordinate K(+): threonine 250, valine 252, and threonine 255. Threonine 256 contributes to the Mg(2+) binding site. Lysine 459 serves as a coordination point for (6S)-5-formyl-5,6,7,8-tetrahydrofolate.

The protein belongs to the TRAFAC class TrmE-Era-EngA-EngB-Septin-like GTPase superfamily. TrmE GTPase family. In terms of assembly, homodimer. Heterotetramer of two MnmE and two MnmG subunits. The cofactor is K(+).

It is found in the cytoplasm. Its function is as follows. Exhibits a very high intrinsic GTPase hydrolysis rate. Involved in the addition of a carboxymethylaminomethyl (cmnm) group at the wobble position (U34) of certain tRNAs, forming tRNA-cmnm(5)s(2)U34. In Staphylococcus epidermidis (strain ATCC 35984 / DSM 28319 / BCRC 17069 / CCUG 31568 / BM 3577 / RP62A), this protein is tRNA modification GTPase MnmE.